The sequence spans 201 residues: Coiled-coil domain-containing protein 195 (201 aa).

Positions 4-38 (DIQLMRLIQEMRAEIHKLEKENQALRMKLTASSQR) form a coiled coil. 2 disordered regions span residues 28 to 72 (LRMK…DAAP) and 179 to 201 (SKNSSSLKHSPNQATNQLSIIAE). Low complexity predominate over residues 179–188 (SKNSSSLKHS). Residues 189-201 (PNQATNQLSIIAE) show a composition bias toward polar residues.

The chain is Coiled-coil domain-containing protein 195 from Homo sapiens (Human).